The following is a 535-amino-acid chain: 5,6-dihydroxyindole-2-carboxylic acid oxidase (535 aa).

The N-terminal stretch at 1–23 (MQLPMLLLVSLPLLLNMFKPAEA) is a signal peptide. Topologically, residues 24–478 (QFPRQCATIE…GPLRVTEMIT (455 aa)) are lumenal, melanosome. 5 disulfide bridges follow: Cys29–Cys40, Cys41–Cys64, Cys55–Cys98, Cys100–Cys109, and Cys112–Cys121. 2 N-linked (GlcNAc...) asparagine glycosylation sites follow: Asn95 and Asn103. Asn180 is a glycosylation site (N-linked (GlcNAc...) asparagine). 3 residues coordinate Zn(2+): His191, His214, and His223. 2 disulfides stabilise this stretch: Cys257–Cys260 and Cys289–Cys302. Asn303 and Asn349 each carry an N-linked (GlcNAc...) asparagine glycan. Zn(2+)-binding residues include His376 and His380. N-linked (GlcNAc...) asparagine glycosylation is present at Asn384. A Zn(2+)-binding site is contributed by His403. A helical transmembrane segment spans residues 479 to 499 (IAIVTALVLVAIIFAAAACIV). Over 500-535 (RAKKNRDELHQPLLTDQYQHYSDDYDGIATPSQSVV) the chain is Cytoplasmic.

It belongs to the tyrosinase family. Tyrosinase, TYRP1 and TYRP2 may form a multienzyme complex. Cu(2+) is required as a cofactor. The cofactor is Zn(2+).

It localises to the melanosome membrane. The enzyme catalyses 2 5,6-dihydroxyindole-2-carboxylate + O2 = 2 indole-5,6-quinone-2-carboxylate + 2 H2O. It participates in pigment biosynthesis; melanin biosynthesis. Its function is as follows. Plays a role in melanin biosynthesis. Catalyzes the oxidation of 5,6-dihydroxyindole-2-carboxylic acid (DHICA) into indole-5,6-quinone-2-carboxylic acid. May regulate or influence the type of melanin synthesized. Also to a lower extent, capable of hydroxylating tyrosine and producing melanin. The chain is 5,6-dihydroxyindole-2-carboxylic acid oxidase (TYRP1) from Gallus gallus (Chicken).